The following is a 158-amino-acid chain: Rhombotin-2 (158 aa).

LIM zinc-binding domains are found at residues 30–89 and 94–153; these read CGGC…RLFG and CASC…EWTK.

In terms of assembly, interacts via its LIM domains with ELF2 and LDB1. Also interacts with basic helix-loop-helix protein TAL1/SCL and can assemble in a complex with LMO2 and TAL1/SCL. Interacts with BEX2 and KDM5A.

The protein resides in the nucleus. Functionally, acts with TAL1/SCL to regulate red blood cell development. Also acts with LDB1 to maintain erythroid precursors in an immature state. This chain is Rhombotin-2 (LMO2), found in Homo sapiens (Human).